A 203-amino-acid chain; its full sequence is CS5 fimbrial subunit (203 aa).

The signal sequence occupies residues 1–22 (MKKNLLITSVLAMATVSGSVLA).

Its subcellular location is the fimbrium. In terms of biological role, major subunit of fimbriae. Fimbriae (also called pili), are polar filaments radiating from the surface of the bacterium to a length of 0.5-1.5 micrometers and numbering 100-300 per cell. They enable bacteria to colonize the epithelium of specific host organs. This Escherichia coli protein is CS5 fimbrial subunit.